Consider the following 198-residue polypeptide: Probable GTP-binding protein EngB (198 aa).

The region spanning 22-195 (DLPEIALAGR…WKAIHKMTKT (174 aa)) is the EngB-type G domain. GTP-binding positions include 30–37 (GRSNVGKS), 57–61 (GKTQT), 75–78 (DVPG), 142–145 (TKAD), and 174–176 (FSS). S37 and T59 together coordinate Mg(2+).

Belongs to the TRAFAC class TrmE-Era-EngA-EngB-Septin-like GTPase superfamily. EngB GTPase family. Mg(2+) serves as cofactor.

Necessary for normal cell division and for the maintenance of normal septation. The polypeptide is Probable GTP-binding protein EngB (Bacillus cereus (strain G9842)).